The chain runs to 184 residues: ATP synthase subunit b, chloroplastic (184 aa).

A helical transmembrane segment spans residues 27-49 (LATNPINLSVVLGVLIFFGKGVL).

It belongs to the ATPase B chain family. In terms of assembly, F-type ATPases have 2 components, F(1) - the catalytic core - and F(0) - the membrane proton channel. F(1) has five subunits: alpha(3), beta(3), gamma(1), delta(1), epsilon(1). F(0) has four main subunits: a(1), b(1), b'(1) and c(10-14). The alpha and beta chains form an alternating ring which encloses part of the gamma chain. F(1) is attached to F(0) by a central stalk formed by the gamma and epsilon chains, while a peripheral stalk is formed by the delta, b and b' chains.

It localises to the plastid. It is found in the chloroplast thylakoid membrane. Functionally, f(1)F(0) ATP synthase produces ATP from ADP in the presence of a proton or sodium gradient. F-type ATPases consist of two structural domains, F(1) containing the extramembraneous catalytic core and F(0) containing the membrane proton channel, linked together by a central stalk and a peripheral stalk. During catalysis, ATP synthesis in the catalytic domain of F(1) is coupled via a rotary mechanism of the central stalk subunits to proton translocation. In terms of biological role, component of the F(0) channel, it forms part of the peripheral stalk, linking F(1) to F(0). The sequence is that of ATP synthase subunit b, chloroplastic from Citrus sinensis (Sweet orange).